We begin with the raw amino-acid sequence, 407 residues long: MALPKDVKKVVLAYSGGLDTSIILKWLQTELGAEVVTFTADLGQGEELEPARKKAEMLGIKEIFVEDVREEFVRDFVFPMFRANAVYEGVYLLGTSIARPLISKHLIEIAKKTGADAIAHGATGKGNDQVRFELSAYALNPDIKIIAPWRDWTFKSRTDLLNFAEQHQIPVAKDKKGEAPFSVDANLLHSSSEGKVLEDPAVEAPEYVHMRTISPEAAPDKATVIKVGFRKGDACSINGVEMSPATLLATLNNYGRENGIGRLDLVENRFVGMKSRGVYETPGGTILLAAHRAIESITLDRGAAHLKDDLMPRYAELIYYGFWFSPEREMLQALIDKSQEHVEGEVTLKLYKGNVMVTGRESEKSLYSDALVTFEDDHGAYDQKDAAGFIKLNALRLRTLAKRNLNK.

ATP contacts are provided by residues 13–21 and alanine 40; that span reads AYSGGLDTS. The L-citrulline site is built by tyrosine 91 and serine 96. Residue glycine 121 participates in ATP binding. 3 residues coordinate L-aspartate: threonine 123, asparagine 127, and aspartate 128. Position 127 (asparagine 127) interacts with L-citrulline. Residues arginine 131, serine 182, serine 191, glutamate 267, and tyrosine 279 each contribute to the L-citrulline site.

Belongs to the argininosuccinate synthase family. Type 1 subfamily. As to quaternary structure, homotetramer.

It is found in the cytoplasm. It carries out the reaction L-citrulline + L-aspartate + ATP = 2-(N(omega)-L-arginino)succinate + AMP + diphosphate + H(+). The protein operates within amino-acid biosynthesis; L-arginine biosynthesis; L-arginine from L-ornithine and carbamoyl phosphate: step 2/3. This is Argininosuccinate synthase from Agrobacterium fabrum (strain C58 / ATCC 33970) (Agrobacterium tumefaciens (strain C58)).